We begin with the raw amino-acid sequence, 643 residues long: Asparagine synthetase domain-containing protein 1 (643 aa).

Catalysis depends on Cys-2, which acts as the For GATase activity. A Glutamine amidotransferase type-2 domain is found at 2–184 (CGICCSVNFS…ASGLFRIDLK (183 aa)). Positions 285-601 (QFIDVLSVAV…GLTASALLPK (317 aa)) constitute an Asparagine synthetase domain.

This chain is Asparagine synthetase domain-containing protein 1 (ASNSD1), found in Homo sapiens (Human).